We begin with the raw amino-acid sequence, 465 residues long: Uronate isomerase (465 aa).

This sequence belongs to the metallo-dependent hydrolases superfamily. Uronate isomerase family.

It catalyses the reaction D-glucuronate = D-fructuronate. It carries out the reaction aldehydo-D-galacturonate = keto-D-tagaturonate. It participates in carbohydrate metabolism; pentose and glucuronate interconversion. This Streptococcus equi subsp. equi (strain 4047) protein is Uronate isomerase.